The primary structure comprises 228 residues: MYKRPGHKHLSISIIMDTNTPSVLTVLASWGWNCASSSPATQCLERSTQGCLREGPSAQGCDYCEPVNVENGPPTTFVKNQDHAKNQEYTHFDTLFMVSSIDELGRRQLTDTIRRDLRHSLAKFTIACTKTSSFSSSYATRKGRKKKGPRTQPSNKSLQMFILCRRAHAKHIRAQLQAVIQARKPRKYYTRAIDGSTHPVVPVFVYEFAAIDTVSLHRDNVIVDSSGS.

Belongs to the alphaherpesvirinae HHV-1 UL3 family. In terms of processing, phosphorylated.

It localises to the host nucleus. In Gallus gallus (Chicken), this protein is Nuclear phosphoprotein UL3 homolog (MDV015).